A 1469-amino-acid chain; its full sequence is uncharacterized protein (1469 aa).

The span at 146–180 (GDHITPKEEEEKEKEKEKEKEKEKEKEKEKEKDSE) shows a compositional bias: basic and acidic residues. Disordered regions lie at residues 146 to 186 (GDHI…LQEQ), 231 to 255 (IQNNQNNQNNNDSPINKEIEDDNNN), 306 to 344 (TTTTTTTTTSSSNNCTNSISNTDKSTTTNCPPVENGGDS), 430 to 455 (LNFNNNNNNNNNNNNNNNNNSQPYHY), 520 to 560 (PVKN…NNNS), 654 to 706 (TTTT…PLVR), 719 to 755 (RTQTQLQTKIQPKSPQPQPTAAPEPQKPPTPSIVKNQ), 881 to 958 (YNNI…NIIN), and 1329 to 1369 (NCSS…NSSN). Composition is skewed to low complexity over residues 232-241 (QNNQNNQNNN), 306-327 (TTTTTTTTTSSSNNCTNSISNT), 430-449 (LNFNNNNNNNNNNNNNNNNN), 523-559 (NNNNNNNNNNNNNNNNNNNNNNNNNNNNNNNNNINNN), and 654-693 (TTTTTTNTNSTNTNSTINATSPPHTPKLSSSPLLTTTTTP). Positions 719-731 (RTQTQLQTKIQPK) are enriched in polar residues. Over residues 732 to 749 (SPQPQPTAAPEPQKPPTP) the composition is skewed to pro residues. 2 stretches are compositionally biased toward low complexity: residues 1329–1347 (NCSSSSSSSESNGIDSGSE) and 1354–1369 (RSNTTNNSNNINNSSN).

This is an uncharacterized protein from Dictyostelium discoideum (Social amoeba).